Here is a 144-residue protein sequence, read N- to C-terminus: Transcriptional regulator SlyA (144 aa).

Positions Glu-2–His-135 constitute an HTH marR-type domain. The segment at residues Gln-49–Asp-72 is a DNA-binding region (H-T-H motif).

The protein belongs to the SlyA family. As to quaternary structure, homodimer.

Transcription regulator that can specifically activate or repress expression of target genes. Required to activate expression of virulent genes. This is Transcriptional regulator SlyA from Salmonella choleraesuis (strain SC-B67).